Here is a 44-residue protein sequence, read N- to C-terminus: Alpha-amylase inhibitor WDAI-3 (44 aa).

An intrachain disulfide couples C20 to C41.

The protein belongs to the protease inhibitor I6 (cereal trypsin/alpha-amylase inhibitor) family. Homodimer. Post-translationally, the disulfide bonds are essential for the inhibitor activity. Endosperm.

It localises to the secreted. Functionally, alpha-amylase inhibitor. This is Alpha-amylase inhibitor WDAI-3 (IHA-B1-2) from Triticum aestivum (Wheat).